The chain runs to 876 residues: Alanine--tRNA ligase (876 aa).

The interval 2–461 is catalytic; sequence SKSTAEIRQA…VDSASEFKGY (460 aa). The residue at position 74 (Lys74) is an N6-acetyllysine. Residues 553-705 form an editing region; it reads DEARRARIRL…EAVTGEGAIA (153 aa). His564, His568, Cys666, and His670 together coordinate Zn(2+). Residues 699 to 808 are important for oligomerization; the sequence is TGEGAIATVH…STIIVLATVV (110 aa). Residues 766 to 875 are C-Ala domain; the sequence is IDVNGVKLLV…SVKGWVSAKL (110 aa).

This sequence belongs to the class-II aminoacyl-tRNA synthetase family. As to quaternary structure, homotetramer. The cofactor is Zn(2+).

It is found in the cytoplasm. It carries out the reaction tRNA(Ala) + L-alanine + ATP = L-alanyl-tRNA(Ala) + AMP + diphosphate. The catalysed reaction is (S)-lactate + ATP + H(+) = (S)-lactoyl-AMP + diphosphate. It catalyses the reaction (S)-lactoyl-AMP + L-lysyl-[protein] = N(6)-[(S)-lactoyl]-L-lysyl-[protein] + AMP + 2 H(+). With respect to regulation, acetylation at Lys-74 decreases the alanylation activity for tRNA(Ala); a protein that is fully acetylated is inactive in vitro. Its function is as follows. Catalyzes the attachment of L-alanine to tRNA(Ala) in a two-step reaction: L-alanine is first activated by ATP to form Ala-AMP and then transferred to the acceptor end of tRNA(Ala). AlaRS also incorrectly activates the sterically smaller amino acid glycine as well as the sterically larger amino acid L-serine; generates 2-fold more mischarged Gly than Ser. These mischarged amino acids occur because the of inherent physicochemical limitations on discrimination between closely related amino acids (Ala, Gly and Ser) in the charging step. In presence of high levels of lactate, also acts as a protein lactyltransferase that mediates lactylation of lysine residues in target proteins. In terms of biological role, edits mischarged Ser-tRNA(Ala) and Gly-tRNA(Ala) but not incorrectly charged Ser-tRNA(Thr). Dtd edits Gly-tRNA(Ala) 4-fold better than does AlaRS. Functionally, attaches Ala to transfer-messenger RNA (tmRNA, also known as 10Sa RNA, the product of the ssrA gene). tmRNA plays a major role in rescue of stalled ribosomes via trans-translation. The protein is Alanine--tRNA ligase (alaS) of Escherichia coli (strain K12).